The chain runs to 31 residues: Relaxin B chain (31 aa).

Gln1 is modified (pyrrolidone carboxylic acid).

The protein belongs to the insulin family. As to quaternary structure, heterodimer of a B chain and an A chain linked by two disulfide bonds.

The protein localises to the secreted. In terms of biological role, relaxin is an ovarian hormone that acts with estrogen to produce dilatation of the birth canal in many mammals. This is Relaxin B chain from Phocoenoides dalli dalli (Dall's porpoise).